The sequence spans 361 residues: tRNA 2-selenouridine synthase (361 aa).

The Rhodanese domain occupies 11-134 (LIADTPLIDV…LRQTAIQATW (124 aa)). The active-site S-selanylcysteine intermediate is the Cys-94.

The protein belongs to the SelU family. In terms of assembly, monomer.

The enzyme catalyses 5-methylaminomethyl-2-thiouridine(34) in tRNA + selenophosphate + (2E)-geranyl diphosphate + H2O + H(+) = 5-methylaminomethyl-2-selenouridine(34) in tRNA + (2E)-thiogeraniol + phosphate + diphosphate. The catalysed reaction is 5-methylaminomethyl-2-thiouridine(34) in tRNA + (2E)-geranyl diphosphate = 5-methylaminomethyl-S-(2E)-geranyl-thiouridine(34) in tRNA + diphosphate. It carries out the reaction 5-methylaminomethyl-S-(2E)-geranyl-thiouridine(34) in tRNA + selenophosphate + H(+) = 5-methylaminomethyl-2-(Se-phospho)selenouridine(34) in tRNA + (2E)-thiogeraniol. It catalyses the reaction 5-methylaminomethyl-2-(Se-phospho)selenouridine(34) in tRNA + H2O = 5-methylaminomethyl-2-selenouridine(34) in tRNA + phosphate. Its function is as follows. Involved in the post-transcriptional modification of the uridine at the wobble position (U34) of tRNA(Lys), tRNA(Glu) and tRNA(Gln). Catalyzes the conversion of 2-thiouridine (S2U-RNA) to 2-selenouridine (Se2U-RNA). Acts in a two-step process involving geranylation of 2-thiouridine (S2U) to S-geranyl-2-thiouridine (geS2U) and subsequent selenation of the latter derivative to 2-selenouridine (Se2U) in the tRNA chain. This chain is tRNA 2-selenouridine synthase, found in Salmonella arizonae (strain ATCC BAA-731 / CDC346-86 / RSK2980).